The sequence spans 414 residues: Probable mannose-1-phosphate guanyltransferase (414 aa).

The protein belongs to the transferase hexapeptide repeat family.

The protein localises to the cytoplasm. It localises to the nucleus. The enzyme catalyses alpha-D-mannose 1-phosphate + GTP + H(+) = GDP-alpha-D-mannose + diphosphate. It functions in the pathway nucleotide-sugar biosynthesis; GDP-alpha-D-mannose biosynthesis; GDP-alpha-D-mannose from alpha-D-mannose 1-phosphate (GTP route): step 1/1. Involved in cell wall synthesis where it is required for glycosylation. The protein is Probable mannose-1-phosphate guanyltransferase of Schizosaccharomyces pombe (strain 972 / ATCC 24843) (Fission yeast).